Here is a 557-residue protein sequence, read N- to C-terminus: Dihydroxy-acid dehydratase 1 (557 aa).

C50 contributes to the [2Fe-2S] cluster binding site. Residue D82 participates in Mg(2+) binding. C123 is a [2Fe-2S] cluster binding site. Residues D124 and K125 each contribute to the Mg(2+) site. An N6-carboxylysine modification is found at K125. Residue C195 coordinates [2Fe-2S] cluster. Mg(2+) is bound at residue E447. S473 acts as the Proton acceptor in catalysis.

Belongs to the IlvD/Edd family. As to quaternary structure, homodimer. The cofactor is [2Fe-2S] cluster. Mg(2+) is required as a cofactor.

It catalyses the reaction (2R)-2,3-dihydroxy-3-methylbutanoate = 3-methyl-2-oxobutanoate + H2O. The catalysed reaction is (2R,3R)-2,3-dihydroxy-3-methylpentanoate = (S)-3-methyl-2-oxopentanoate + H2O. Its pathway is amino-acid biosynthesis; L-isoleucine biosynthesis; L-isoleucine from 2-oxobutanoate: step 3/4. It participates in amino-acid biosynthesis; L-valine biosynthesis; L-valine from pyruvate: step 3/4. Its function is as follows. Functions in the biosynthesis of branched-chain amino acids. Catalyzes the dehydration of (2R,3R)-2,3-dihydroxy-3-methylpentanoate (2,3-dihydroxy-3-methylvalerate) into 2-oxo-3-methylpentanoate (2-oxo-3-methylvalerate) and of (2R)-2,3-dihydroxy-3-methylbutanoate (2,3-dihydroxyisovalerate) into 2-oxo-3-methylbutanoate (2-oxoisovalerate), the penultimate precursor to L-isoleucine and L-valine, respectively. This chain is Dihydroxy-acid dehydratase 1, found in Cupriavidus pinatubonensis (strain JMP 134 / LMG 1197) (Cupriavidus necator (strain JMP 134)).